The following is a 213-amino-acid chain: ATP-dependent Clp protease proteolytic subunit (213 aa).

The active-site Nucleophile is the Ser-114. His-139 is an active-site residue.

The protein belongs to the peptidase S14 family. As to quaternary structure, fourteen ClpP subunits assemble into 2 heptameric rings which stack back to back to give a disk-like structure with a central cavity, resembling the structure of eukaryotic proteasomes.

It is found in the cytoplasm. The catalysed reaction is Hydrolysis of proteins to small peptides in the presence of ATP and magnesium. alpha-casein is the usual test substrate. In the absence of ATP, only oligopeptides shorter than five residues are hydrolyzed (such as succinyl-Leu-Tyr-|-NHMec, and Leu-Tyr-Leu-|-Tyr-Trp, in which cleavage of the -Tyr-|-Leu- and -Tyr-|-Trp bonds also occurs).. Cleaves peptides in various proteins in a process that requires ATP hydrolysis. Has a chymotrypsin-like activity. Plays a major role in the degradation of misfolded proteins. The protein is ATP-dependent Clp protease proteolytic subunit of Pseudomonas putida (strain ATCC 47054 / DSM 6125 / CFBP 8728 / NCIMB 11950 / KT2440).